The chain runs to 176 residues: Nucleoside triphosphate/diphosphate phosphatase (176 aa).

The Proton donor role is filled by arginine 23. The Mg(2+) site is built by asparagine 87, aspartate 103, aspartate 105, aspartate 107, aspartate 120, and glutamate 123.

Belongs to the Ntdp family. The cofactor is Mg(2+).

It catalyses the reaction a ribonucleoside 5'-triphosphate + H2O = a ribonucleoside 5'-diphosphate + phosphate + H(+). It carries out the reaction a ribonucleoside 5'-diphosphate + H2O = a ribonucleoside 5'-phosphate + phosphate + H(+). Has nucleoside phosphatase activity towards nucleoside triphosphates and nucleoside diphosphates. This is Nucleoside triphosphate/diphosphate phosphatase from Bacillus licheniformis (strain ATCC 14580 / DSM 13 / JCM 2505 / CCUG 7422 / NBRC 12200 / NCIMB 9375 / NCTC 10341 / NRRL NRS-1264 / Gibson 46).